A 202-amino-acid polypeptide reads, in one-letter code: MASQGRRRRPLRRPETVVPGEATETDSERSASSSEEEELYLGPSGPTRGRPTGLRVAGEAAETDSEPEPEPEPTAAPRDLPPLVVQRESAEEAWGTEEAPAPAPARSLLQLRLAESQARLDHDVAAAVSGVYRRAGRDVAALASRLAAAQAAGLAAAHSVRLARGDLCALAERLDIVAGCRLLPDIRGVPGTEPEKDPGPRA.

The span at 1–11 (MASQGRRRRPL) shows a compositional bias: basic residues. A disordered region spans residues 1 to 82 (MASQGRRRRP…PTAAPRDLPP (82 aa)). The segment covering 41 to 55 (LGPSGPTRGRPTGLR) has biased composition (low complexity). Acidic residues predominate over residues 61 to 71 (AETDSEPEPEP). Thr63 is modified (phosphothreonine). Ser65 is subject to Phosphoserine.

It belongs to the BLOC1S3 family. As to quaternary structure, interacts with BLOC1S4, BLOC1S5 and BLOC1S6. Component of the biogenesis of lysosome-related organelles complex 1 (BLOC-1) composed of BLOC1S1, BLOC1S2, BLOC1S3, BLOC1S4, BLOC1S5, BLOC1S6, DTNBP1/BLOC1S7 and SNAPIN/BLOC1S8. Octamer composed of one copy each BLOC1S1, BLOC1S2, BLOC1S3, BLOC1S4, BLOC1S5, BLOC1S6, DTNBP1/BLOC1S7 and SNAPIN/BLOC1S8. The BLOC-1 complex associates with the AP-3 protein complex and membrane protein cargos. Interacts directly with BLOC1S2.

The protein resides in the cytoplasm. Functionally, component of the BLOC-1 complex, a complex that is required for normal biogenesis of lysosome-related organelles (LRO), such as platelet dense granules and melanosomes. In concert with the AP-3 complex, the BLOC-1 complex is required to target membrane protein cargos into vesicles assembled at cell bodies for delivery into neurites and nerve terminals. The BLOC-1 complex, in association with SNARE proteins, is also proposed to be involved in neurite extension. Plays a role in intracellular vesicle trafficking. The protein is Biogenesis of lysosome-related organelles complex 1 subunit 3 (BLOC1S3) of Homo sapiens (Human).